The following is a 258-amino-acid chain: Ubiquinone/menaquinone biosynthesis C-methyltransferase UbiE (258 aa).

Residues 1-21 are disordered; that stretch reads MSESRTSADGGMETSYGFREV. S-adenosyl-L-methionine-binding positions include T81, D102, and 130-131; that span reads NA.

This sequence belongs to the class I-like SAM-binding methyltransferase superfamily. MenG/UbiE family.

It carries out the reaction a 2-demethylmenaquinol + S-adenosyl-L-methionine = a menaquinol + S-adenosyl-L-homocysteine + H(+). The catalysed reaction is a 2-methoxy-6-(all-trans-polyprenyl)benzene-1,4-diol + S-adenosyl-L-methionine = a 5-methoxy-2-methyl-3-(all-trans-polyprenyl)benzene-1,4-diol + S-adenosyl-L-homocysteine + H(+). The protein operates within quinol/quinone metabolism; menaquinone biosynthesis; menaquinol from 1,4-dihydroxy-2-naphthoate: step 2/2. Its pathway is cofactor biosynthesis; ubiquinone biosynthesis. Functionally, methyltransferase required for the conversion of demethylmenaquinol (DMKH2) to menaquinol (MKH2) and the conversion of 2-polyprenyl-6-methoxy-1,4-benzoquinol (DDMQH2) to 2-polyprenyl-3-methyl-6-methoxy-1,4-benzoquinol (DMQH2). This chain is Ubiquinone/menaquinone biosynthesis C-methyltransferase UbiE, found in Rhizobium johnstonii (strain DSM 114642 / LMG 32736 / 3841) (Rhizobium leguminosarum bv. viciae).